A 130-amino-acid chain; its full sequence is Small ribosomal subunit protein uS9 (130 aa).

This sequence belongs to the universal ribosomal protein uS9 family.

The polypeptide is Small ribosomal subunit protein uS9 (Photorhabdus laumondii subsp. laumondii (strain DSM 15139 / CIP 105565 / TT01) (Photorhabdus luminescens subsp. laumondii)).